The chain runs to 542 residues: Thermosome subunit (542 aa).

The protein belongs to the TCP-1 chaperonin family. In terms of assembly, forms an oligomeric complex of eight-membered rings.

In terms of biological role, molecular chaperone; binds unfolded polypeptides in vitro, and has a weak ATPase activity. This chain is Thermosome subunit (ths), found in Methanocaldococcus jannaschii (strain ATCC 43067 / DSM 2661 / JAL-1 / JCM 10045 / NBRC 100440) (Methanococcus jannaschii).